Consider the following 146-residue polypeptide: Large ribosomal subunit protein uL15 (146 aa).

Residues 1-13 (MKLHELKAAEGSR) are compositionally biased toward basic and acidic residues. A disordered region spans residues 1–61 (MKLHELKAAE…GGQTPLFRRM (61 aa)). Gly residues-rich tracts occupy residues 23-35 (TSSG…GRGQ) and 42-52 (SGGGVRLGFEG).

This sequence belongs to the universal ribosomal protein uL15 family. As to quaternary structure, part of the 50S ribosomal subunit.

Binds to the 23S rRNA. The chain is Large ribosomal subunit protein uL15 from Streptococcus uberis (strain ATCC BAA-854 / 0140J).